The primary structure comprises 252 residues: Carbohydrate deacetylase (252 aa).

Mg(2+)-binding residues include His-59 and His-122.

The protein belongs to the YdjC deacetylase family. Homodimer. Requires Mg(2+) as cofactor.

Its function is as follows. Probably catalyzes the deacetylation of acetylated carbohydrates an important step in the degradation of oligosaccharides. The chain is Carbohydrate deacetylase from Vibrio cholerae serotype O1 (strain ATCC 39315 / El Tor Inaba N16961).